A 219-amino-acid chain; its full sequence is Probable glutathione S-transferase MSR-1 (219 aa).

Positions 4 to 83 (NNVVLLDFSG…YIDEVWHEKC (80 aa)) constitute a GST N-terminal domain. Glutathione is bound by residues Ser14, Lys41, Ile55, and 67-68 (ES). The GST C-terminal domain occupies 89-208 (DPYQRSQARF…LPHPHKIYDF (120 aa)).

This sequence belongs to the GST superfamily. HSP26 family.

It carries out the reaction RX + glutathione = an S-substituted glutathione + a halide anion + H(+). In terms of biological role, may play an important role in hormonal and growth regulatory responses. The sequence is that of Probable glutathione S-transferase MSR-1 (MSR-1) from Nicotiana plumbaginifolia (Leadwort-leaved tobacco).